The following is a 258-amino-acid chain: Regulatory protein RecX (258 aa).

This sequence belongs to the RecX family.

It is found in the cytoplasm. In terms of biological role, modulates RecA activity. This Streptococcus mutans serotype c (strain ATCC 700610 / UA159) protein is Regulatory protein RecX.